Here is a 599-residue protein sequence, read N- to C-terminus: Elongation factor 4 (599 aa).

In terms of domain architecture, tr-type G spans 5–187; sequence SHIRNFSIIA…HLVRVIPPPQ (183 aa). Residues 17–22 and 134–137 contribute to the GTP site; these read DHGKST and NKMD.

This sequence belongs to the TRAFAC class translation factor GTPase superfamily. Classic translation factor GTPase family. LepA subfamily.

It localises to the cell inner membrane. The enzyme catalyses GTP + H2O = GDP + phosphate + H(+). Required for accurate and efficient protein synthesis under certain stress conditions. May act as a fidelity factor of the translation reaction, by catalyzing a one-codon backward translocation of tRNAs on improperly translocated ribosomes. Back-translocation proceeds from a post-translocation (POST) complex to a pre-translocation (PRE) complex, thus giving elongation factor G a second chance to translocate the tRNAs correctly. Binds to ribosomes in a GTP-dependent manner. This chain is Elongation factor 4, found in Azotobacter vinelandii (strain DJ / ATCC BAA-1303).